A 205-amino-acid chain; its full sequence is Dihydrofolate reductase (205 aa).

Positions 1–201 (MLALVVALAS…TSFKMFLYTK (201 aa)) constitute a DHFR domain. NADP(+)-binding positions include Ala-7 and 13–19 (GIGNANA). 29-34 (DMAWFR) lines the substrate pocket. An NADP(+)-binding site is contributed by 62 to 64 (RRT). Arg-78 is a substrate binding site. Residues 84-86 (SRG) and 118-125 (GGRDVYSL) contribute to the NADP(+) site.

It belongs to the dihydrofolate reductase family.

The enzyme catalyses (6S)-5,6,7,8-tetrahydrofolate + NADP(+) = 7,8-dihydrofolate + NADPH + H(+). Its pathway is cofactor biosynthesis; tetrahydrofolate biosynthesis; 5,6,7,8-tetrahydrofolate from 7,8-dihydrofolate: step 1/1. Key enzyme in folate metabolism. Catalyzes an essential reaction for de novo glycine and purine synthesis, and for DNA precursor synthesis. The polypeptide is Dihydrofolate reductase (DHFR-1) (Encephalitozoon cuniculi (strain GB-M1) (Microsporidian parasite)).